The sequence spans 203 residues: Ribosomal RNA large subunit methyltransferase E (203 aa).

S-adenosyl-L-methionine contacts are provided by Gly-51, Trp-53, Asp-69, Asp-85, and Asp-108. Catalysis depends on Lys-148, which acts as the Proton acceptor.

It belongs to the class I-like SAM-binding methyltransferase superfamily. RNA methyltransferase RlmE family.

The protein localises to the cytoplasm. The enzyme catalyses uridine(2552) in 23S rRNA + S-adenosyl-L-methionine = 2'-O-methyluridine(2552) in 23S rRNA + S-adenosyl-L-homocysteine + H(+). Specifically methylates the uridine in position 2552 of 23S rRNA at the 2'-O position of the ribose in the fully assembled 50S ribosomal subunit. The protein is Ribosomal RNA large subunit methyltransferase E of Methanosphaerula palustris (strain ATCC BAA-1556 / DSM 19958 / E1-9c).